Here is a 344-residue protein sequence, read N- to C-terminus: Phenylalanine--tRNA ligase alpha subunit (344 aa).

Glu-256 is a Mg(2+) binding site.

The protein belongs to the class-II aminoacyl-tRNA synthetase family. Phe-tRNA synthetase alpha subunit type 1 subfamily. As to quaternary structure, tetramer of two alpha and two beta subunits. Requires Mg(2+) as cofactor.

It is found in the cytoplasm. The catalysed reaction is tRNA(Phe) + L-phenylalanine + ATP = L-phenylalanyl-tRNA(Phe) + AMP + diphosphate + H(+). This chain is Phenylalanine--tRNA ligase alpha subunit, found in Geobacillus kaustophilus (strain HTA426).